Reading from the N-terminus, the 339-residue chain is Non-homologous end joining protein Ku (339 aa).

The 178-residue stretch at 10–187 (ITFGLVNIPV…LPKATTGKPT (178 aa)) folds into the Ku domain. Disordered stretches follow at residues 230-251 (DSGKTHQLTPPAEEEEAPRQGA) and 263-339 (SLGQ…KHAA). A compositionally biased stretch (basic and acidic residues) spans 267 to 277 (RGKEDKEDATP). Basic residues predominate over residues 278-289 (ARRKAPARHAAA). Over residues 290–310 (RKQPAAKRAATPPAKRASTAA) the composition is skewed to low complexity.

This sequence belongs to the prokaryotic Ku family. Homodimer. Interacts with LigD.

Its function is as follows. With LigD forms a non-homologous end joining (NHEJ) DNA repair enzyme, which repairs dsDNA breaks with reduced fidelity. Binds linear dsDNA with 5'- and 3'- overhangs but not closed circular dsDNA nor ssDNA. Recruits and stimulates the ligase activity of LigD. In Cupriavidus necator (strain ATCC 17699 / DSM 428 / KCTC 22496 / NCIMB 10442 / H16 / Stanier 337) (Ralstonia eutropha), this protein is Non-homologous end joining protein Ku.